A 297-amino-acid chain; its full sequence is Probable endonuclease 4 (297 aa).

The Zn(2+) site is built by H69, H110, E145, D179, H182, H214, D227, H229, and E259.

The protein belongs to the AP endonuclease 2 family. Requires Zn(2+) as cofactor.

It catalyses the reaction Endonucleolytic cleavage to 5'-phosphooligonucleotide end-products.. Functionally, endonuclease IV plays a role in DNA repair. It cleaves phosphodiester bonds at apurinic or apyrimidinic (AP) sites, generating a 3'-hydroxyl group and a 5'-terminal sugar phosphate. The chain is Probable endonuclease 4 from Bacillus velezensis (strain DSM 23117 / BGSC 10A6 / LMG 26770 / FZB42) (Bacillus amyloliquefaciens subsp. plantarum).